A 291-amino-acid polypeptide reads, in one-letter code: Ribosomal RNA small subunit methyltransferase I (291 aa).

The protein belongs to the methyltransferase superfamily. RsmI family.

Its subcellular location is the cytoplasm. It carries out the reaction cytidine(1402) in 16S rRNA + S-adenosyl-L-methionine = 2'-O-methylcytidine(1402) in 16S rRNA + S-adenosyl-L-homocysteine + H(+). In terms of biological role, catalyzes the 2'-O-methylation of the ribose of cytidine 1402 (C1402) in 16S rRNA. The sequence is that of Ribosomal RNA small subunit methyltransferase I from Neisseria meningitidis serogroup A / serotype 4A (strain DSM 15465 / Z2491).